The primary structure comprises 129 residues: MKEVIDTVGRRKTSVARVFMTPGKGRVIINKLPVEEYFRDEVKRLHALRPLVLTEKTEDFDIKVNVKGGGLSGQSGAVSLGIARALTEFDEAARAVLKQERLLTRDPRMVERKKFGRKKARKSFQFSKR.

It belongs to the universal ribosomal protein uS9 family.

The protein is Small ribosomal subunit protein uS9 of Chlorobium luteolum (strain DSM 273 / BCRC 81028 / 2530) (Pelodictyon luteolum).